A 350-amino-acid chain; its full sequence is MRASQSPMLDPRARQLLRTLIARYIRDGEPVGSKTLAQHAGLDVSPATIRNILADLEDVGLLSSPHTSAGRVPTAHGYRVFVDSLVQMQPPGEEEVRRLRAELASGNGTQSLLGSASQMLSAMSHFVGVVSAPRREQFAFRHIDFVALDARRVLAILVFADNEVQNRVIEPRRAYEPAELERVANYLNAQFAGRALADIRACLLRELRMAKSEMEQLLAHSVDLASEALVPADAEDMVMAGQTRLMGVQDLSDLDRLRELFEAFASKREILQLLERTIQAPGVRIFIGEETGMVSLEDVSLVTAPYAANGQVLGVLGVIGPKRMAYDRLIPLVQTAADVLGAAMESPGTR.

It belongs to the HrcA family.

Functionally, negative regulator of class I heat shock genes (grpE-dnaK-dnaJ and groELS operons). Prevents heat-shock induction of these operons. The protein is Heat-inducible transcription repressor HrcA of Xanthomonas euvesicatoria pv. vesicatoria (strain 85-10) (Xanthomonas campestris pv. vesicatoria).